The following is a 473-amino-acid chain: Glutamate--tRNA ligase 2 (473 aa).

A 'HIGH' region motif is present at residues 11-21 (PSPTGYLHIGG). Basic and acidic residues predominate over residues 113 to 133 (KARAEGRPPRYDGRWRDRDPS). A disordered region spans residues 113–136 (KARAEGRPPRYDGRWRDRDPSEAP). The short motif at 240 to 244 (KLSKR) is the 'KMSKS' region element. Residue Lys-243 coordinates ATP.

This sequence belongs to the class-I aminoacyl-tRNA synthetase family. Glutamate--tRNA ligase type 1 subfamily. As to quaternary structure, monomer.

It is found in the cytoplasm. It catalyses the reaction tRNA(Glu) + L-glutamate + ATP = L-glutamyl-tRNA(Glu) + AMP + diphosphate. In terms of biological role, catalyzes the attachment of glutamate to tRNA(Glu) in a two-step reaction: glutamate is first activated by ATP to form Glu-AMP and then transferred to the acceptor end of tRNA(Glu). The sequence is that of Glutamate--tRNA ligase 2 from Brucella suis biovar 1 (strain 1330).